A 405-amino-acid polypeptide reads, in one-letter code: Probable tRNA sulfurtransferase (405 aa).

In terms of domain architecture, THUMP spans 60-165 (QEVSASLKKI…PDAAYISHEE (106 aa)). Residues 183 to 184 (ML), 208 to 209 (HF), Arg265, Gly287, and Gln296 each bind ATP.

The protein belongs to the ThiI family.

The protein resides in the cytoplasm. It carries out the reaction [ThiI sulfur-carrier protein]-S-sulfanyl-L-cysteine + a uridine in tRNA + 2 reduced [2Fe-2S]-[ferredoxin] + ATP + H(+) = [ThiI sulfur-carrier protein]-L-cysteine + a 4-thiouridine in tRNA + 2 oxidized [2Fe-2S]-[ferredoxin] + AMP + diphosphate. The catalysed reaction is [ThiS sulfur-carrier protein]-C-terminal Gly-Gly-AMP + S-sulfanyl-L-cysteinyl-[cysteine desulfurase] + AH2 = [ThiS sulfur-carrier protein]-C-terminal-Gly-aminoethanethioate + L-cysteinyl-[cysteine desulfurase] + A + AMP + 2 H(+). It functions in the pathway cofactor biosynthesis; thiamine diphosphate biosynthesis. Functionally, catalyzes the ATP-dependent transfer of a sulfur to tRNA to produce 4-thiouridine in position 8 of tRNAs, which functions as a near-UV photosensor. Also catalyzes the transfer of sulfur to the sulfur carrier protein ThiS, forming ThiS-thiocarboxylate. This is a step in the synthesis of thiazole, in the thiamine biosynthesis pathway. The sulfur is donated as persulfide by IscS. This is Probable tRNA sulfurtransferase from Streptococcus suis (strain 98HAH33).